Consider the following 333-residue polypeptide: Protein SEEDLING LETHAL 1, chloroplastic (333 aa).

A chloroplast-targeting transit peptide spans 1–55; it reads MQQEALSFLSSSLPSLHHNFPSLSRLRFNNFPALSFKPNTSSSSSSFFKSPDIPS. Residues 38 to 67 are disordered; it reads PNTSSSSSSFFKSPDIPSLSSTTTTTTTTE.

Belongs to the mTERF family. In terms of assembly, self-interacts. Associates with the plastid-encoded RNA polymerase (PEP) complex. Interacts directly with PTAC7/PAP12, PTAC12/HMR/PAP5 and PTAC14/PAP7. As to expression, expressed in green aerial tissues such as cotyledons, leaves, flowers and siliques, but not in roots.

The protein resides in the plastid. The protein localises to the chloroplast stroma. It localises to the chloroplast nucleoid. Functionally, transcription termination factor required for chloroplast gene expression and protein synthesis in chloroplasts. Necessary for chloroplast photosynthetic complexes assembly by modulating the accumulation of photosynthetic proteins. Essential for embryogenesis. The polypeptide is Protein SEEDLING LETHAL 1, chloroplastic (Arabidopsis thaliana (Mouse-ear cress)).